A 976-amino-acid polypeptide reads, in one-letter code: DNA-directed RNA polymerase 1, mitochondrial (976 aa).

A mitochondrion-targeting transit peptide spans 1–42 (MWRNILGRASLRKVKFLSDSSSSGTHYPVNRVRGILSSVNLS). Residues aspartate 677, lysine 752, and aspartate 909 contribute to the active site.

It belongs to the phage and mitochondrial RNA polymerase family.

The protein localises to the mitochondrion. The catalysed reaction is RNA(n) + a ribonucleoside 5'-triphosphate = RNA(n+1) + diphosphate. Its function is as follows. DNA-dependent RNA polymerase catalyzes the transcription of DNA into RNA using the four ribonucleoside triphosphates as substrates. The protein is DNA-directed RNA polymerase 1, mitochondrial (RPOT1) of Arabidopsis thaliana (Mouse-ear cress).